A 145-amino-acid chain; its full sequence is 3-dehydroquinate dehydratase (145 aa).

Tyr23 (proton acceptor) is an active-site residue. Substrate is bound by residues Asn74, His80, and Asp87. His100 acts as the Proton donor in catalysis. Substrate is bound by residues 101–102 (IS) and Arg111.

The protein belongs to the type-II 3-dehydroquinase family. Homododecamer.

It carries out the reaction 3-dehydroquinate = 3-dehydroshikimate + H2O. It functions in the pathway metabolic intermediate biosynthesis; chorismate biosynthesis; chorismate from D-erythrose 4-phosphate and phosphoenolpyruvate: step 3/7. In terms of biological role, catalyzes a trans-dehydration via an enolate intermediate. This Mycobacterium leprae (strain Br4923) protein is 3-dehydroquinate dehydratase.